Reading from the N-terminus, the 360-residue chain is UPF0324 membrane protein plu2856 (360 aa).

Transmembrane regions (helical) follow at residues 20 to 42, 47 to 69, 104 to 126, 136 to 155, 167 to 189, 239 to 256, 277 to 299, 304 to 326, and 333 to 355; these read LIPG…NIPW, GLGT…YPLL, VGIT…AIWL, QTVI…AIMA, VAVA…PWFY, MIRV…SRYI, WFAV…AAIV, NIDT…VSAI, and PILL…NLGI.

This sequence belongs to the UPF0324 family.

The protein resides in the cell membrane. The chain is UPF0324 membrane protein plu2856 from Photorhabdus laumondii subsp. laumondii (strain DSM 15139 / CIP 105565 / TT01) (Photorhabdus luminescens subsp. laumondii).